Here is a 452-residue protein sequence, read N- to C-terminus: Serine carboxypeptidase-like 26 (452 aa).

The first 20 residues, 1 to 20 (MARLLLLFFFFLILLHYASC), serve as a signal peptide directing secretion. 2 N-linked (GlcNAc...) asparagine glycosylation sites follow: asparagine 52 and asparagine 138. Intrachain disulfides connect cysteine 87/cysteine 338, cysteine 244/cysteine 256, and cysteine 280/cysteine 306. Serine 180 is an active-site residue. N-linked (GlcNAc...) asparagine glycosylation occurs at asparagine 327. Active-site residues include aspartate 375 and histidine 427.

This sequence belongs to the peptidase S10 family. In terms of tissue distribution, ubiquitous.

It localises to the secreted. Functionally, probable carboxypeptidase. This chain is Serine carboxypeptidase-like 26 (SCPL26), found in Arabidopsis thaliana (Mouse-ear cress).